The following is a 514-amino-acid chain: Pentatricopeptide repeat-containing protein At4g26800 (514 aa).

PPR repeat units lie at residues 122–156 (DLYT…GIEP), 157–191 (DIVT…GIKR), 192–226 (DVVV…GISP), 227–261 (NVVT…KINP), 262–296 (NVIT…SIDP), 297–331 (NVFT…GCTP), 332–366 (NVVT…GVAA), 367–401 (NTVS…GLIP), 402–436 (NIRS…RNDL), 437–471 (DIIT…RVEP), and 472–510 (DFKA…ESAP).

It belongs to the PPR family. P subfamily.

In Arabidopsis thaliana (Mouse-ear cress), this protein is Pentatricopeptide repeat-containing protein At4g26800.